A 306-amino-acid chain; its full sequence is Aspartate carbamoyltransferase catalytic subunit (306 aa).

Carbamoyl phosphate contacts are provided by arginine 55 and threonine 56. Lysine 84 contacts L-aspartate. Residues arginine 105, histidine 133, and glutamine 136 each coordinate carbamoyl phosphate. 2 residues coordinate L-aspartate: arginine 166 and arginine 227. Carbamoyl phosphate contacts are provided by leucine 265 and proline 266.

Belongs to the aspartate/ornithine carbamoyltransferase superfamily. ATCase family. Heterododecamer (2C3:3R2) of six catalytic PyrB chains organized as two trimers (C3), and six regulatory PyrI chains organized as three dimers (R2).

The enzyme catalyses carbamoyl phosphate + L-aspartate = N-carbamoyl-L-aspartate + phosphate + H(+). It participates in pyrimidine metabolism; UMP biosynthesis via de novo pathway; (S)-dihydroorotate from bicarbonate: step 2/3. Its function is as follows. Catalyzes the condensation of carbamoyl phosphate and aspartate to form carbamoyl aspartate and inorganic phosphate, the committed step in the de novo pyrimidine nucleotide biosynthesis pathway. The protein is Aspartate carbamoyltransferase catalytic subunit of Aeromonas salmonicida (strain A449).